Reading from the N-terminus, the 532-residue chain is Mitogen-activated protein kinase kinase mkk1 (532 aa).

Residues 235-505 form the Protein kinase domain; sequence IVELGGLGEG…PWKMLEHPWM (271 aa). ATP is bound by residues 241–249 and Lys264; that span reads LGEGAGGAV. Catalysis depends on Asp362, which acts as the Proton acceptor.

Belongs to the protein kinase superfamily. STE Ser/Thr protein kinase family. MAP kinase kinase subfamily.

It catalyses the reaction L-seryl-[protein] + ATP = O-phospho-L-seryl-[protein] + ADP + H(+). The enzyme catalyses L-threonyl-[protein] + ATP = O-phospho-L-threonyl-[protein] + ADP + H(+). In terms of biological role, mitogen-activated protein kinase kinase, part of the mkh1-mkk1-spm1 MAPK cascade that regulates regulates vegetative growth, conidial formation, colony surface hydrophobicity, osmotic stress, cell wall integrity maintenance, carbon and nitrogen source utilization, chitin distribution, septa formation, and pathogenicity. The sequence is that of Mitogen-activated protein kinase kinase mkk1 from Cytospora mali (Apple Valsa canker fungus).